Consider the following 260-residue polypeptide: Indole-3-glycerol phosphate synthase (260 aa).

This sequence belongs to the TrpC family.

The catalysed reaction is 1-(2-carboxyphenylamino)-1-deoxy-D-ribulose 5-phosphate + H(+) = (1S,2R)-1-C-(indol-3-yl)glycerol 3-phosphate + CO2 + H2O. It functions in the pathway amino-acid biosynthesis; L-tryptophan biosynthesis; L-tryptophan from chorismate: step 4/5. This chain is Indole-3-glycerol phosphate synthase, found in Staphylococcus saprophyticus subsp. saprophyticus (strain ATCC 15305 / DSM 20229 / NCIMB 8711 / NCTC 7292 / S-41).